A 676-amino-acid polypeptide reads, in one-letter code: DNA ligase (676 aa).

Residues 39–43 (DYVYD), 88–91 (SLND), and E118 each bind NAD(+). K120 (N6-AMP-lysine intermediate) is an active-site residue. 4 residues coordinate NAD(+): R141, E175, K291, and K315. 4 residues coordinate Zn(2+): C409, C412, C427, and C432. The BRCT domain occupies 595–676 (EVESPFKDKT…MVDALDASHF (82 aa)).

The protein belongs to the NAD-dependent DNA ligase family. LigA subfamily. It depends on Mg(2+) as a cofactor. Requires Mn(2+) as cofactor.

It catalyses the reaction NAD(+) + (deoxyribonucleotide)n-3'-hydroxyl + 5'-phospho-(deoxyribonucleotide)m = (deoxyribonucleotide)n+m + AMP + beta-nicotinamide D-nucleotide.. Its function is as follows. DNA ligase that catalyzes the formation of phosphodiester linkages between 5'-phosphoryl and 3'-hydroxyl groups in double-stranded DNA using NAD as a coenzyme and as the energy source for the reaction. It is essential for DNA replication and repair of damaged DNA. The chain is DNA ligase from Enterococcus faecalis (strain ATCC 700802 / V583).